A 489-amino-acid chain; its full sequence is EGF-like domain-containing protein 2 (489 aa).

The N-terminal stretch at 1–23 (MMQTLLRGLCVVVLFWGYIKASA) is a signal peptide. In terms of domain architecture, EGF-like spans 73-109 (PATLCDPPCLNGGQCFEPTADTYMCMCSEAFYGSQCE). Disulfide bonds link Cys77–Cys87, Cys81–Cys97, and Cys99–Cys108. A ZP domain is found at 116–370 (ECSGDQITIN…GSCPTPAPPA (255 aa)). A glycan (N-linked (GlcNAc...) asparagine) is linked at Asn229. Disordered regions lie at residues 358–389 (CEPG…AASD) and 404–425 (RSNE…QNAD). The span at 363-374 (CPTPAPPAPVQP) shows a compositional bias: pro residues. The segment covering 404-420 (RSNEKLRLPHNKSDKKS) has biased composition (basic and acidic residues). N-linked (GlcNAc...) asparagine glycosylation is found at Asn414 and Asn479.

Component of the acid-insoluble organic matrix of calcified layers of the shell (at protein level).

Its subcellular location is the secreted. The polypeptide is EGF-like domain-containing protein 2 (Lottia gigantea (Giant owl limpet)).